The sequence spans 970 residues: Disease resistance protein RGA2 (970 aa).

Residues 135–438 (RQAVRRETGS…MAHGFLLSKG (304 aa)) form the NB-ARC domain. Residue 182-189 (GMGGLGKT) participates in ATP binding. LRR repeat units follow at residues 525 to 548 (FISL…IGDL), 550 to 571 (HLRY…LCKL), 573 to 594 (NLQT…ETSK), 595 to 619 (LGSL…IGSL), 638 to 662 (LGEL…KNDK), 672 to 697 (KGNL…EVKV), 752 to 777 (LPCL…DIDV), 787 to 811 (FPSL…EGEE), 813 to 832 (FPVL…LSSN), 833 to 857 (LRAL…MFKN), 859 to 882 (ANLK…LASL), 884 to 906 (ALKS…GLEG), 907 to 931 (LSSL…LQHL), and 946 to 970 (IKRC…NIYI).

Belongs to the disease resistance NB-LRR family.

Functionally, disease resistance protein. Resistance proteins guard the plant against pathogens that contain an appropriate avirulence protein via a direct or indirect interaction with this avirulence protein. That triggers a defense system which restricts the pathogen growth. Confers a broad resistance to all known races of P.infestans. This is Disease resistance protein RGA2 (RGA2) from Solanum bulbocastanum (Wild potato).